The sequence spans 71 residues: uncharacterized protein (71 aa).

Residues 52–71 form a disordered region; it reads KEKFERKEDEKSKPKGVRED.

This is an uncharacterized protein from Archaeoglobus fulgidus (strain ATCC 49558 / DSM 4304 / JCM 9628 / NBRC 100126 / VC-16).